A 301-amino-acid polypeptide reads, in one-letter code: UDP-N-acetylenolpyruvoylglucosamine reductase (301 aa).

The 168-residue stretch at 27–194 folds into the FAD-binding PCMH-type domain; that stretch reads RVGGPADVVF…LDAIFEGTPD (168 aa). Arg172 is an active-site residue. Ser223 serves as the catalytic Proton donor. Residue Glu293 is part of the active site.

This sequence belongs to the MurB family. FAD is required as a cofactor.

It localises to the cytoplasm. The catalysed reaction is UDP-N-acetyl-alpha-D-muramate + NADP(+) = UDP-N-acetyl-3-O-(1-carboxyvinyl)-alpha-D-glucosamine + NADPH + H(+). It participates in cell wall biogenesis; peptidoglycan biosynthesis. Its function is as follows. Cell wall formation. In Caulobacter vibrioides (strain NA1000 / CB15N) (Caulobacter crescentus), this protein is UDP-N-acetylenolpyruvoylglucosamine reductase.